The primary structure comprises 49 residues: Large ribosomal subunit protein eL40 (49 aa).

It belongs to the eukaryotic ribosomal protein eL40 family.

The chain is Large ribosomal subunit protein eL40 from Methanosarcina barkeri (strain Fusaro / DSM 804).